The sequence spans 141 residues: 3-hydroxyacyl-[acyl-carrier-protein] dehydratase FabZ (141 aa).

Histidine 49 is a catalytic residue.

Belongs to the thioester dehydratase family. FabZ subfamily.

The protein localises to the cytoplasm. The catalysed reaction is a (3R)-hydroxyacyl-[ACP] = a (2E)-enoyl-[ACP] + H2O. Involved in unsaturated fatty acids biosynthesis. Catalyzes the dehydration of short chain beta-hydroxyacyl-ACPs and long chain saturated and unsaturated beta-hydroxyacyl-ACPs. This Enterococcus faecalis (strain ATCC 700802 / V583) protein is 3-hydroxyacyl-[acyl-carrier-protein] dehydratase FabZ (fabZ2).